A 426-amino-acid chain; its full sequence is Lipase 7 (426 aa).

A signal peptide spans 1–15 (MFVFLALITLTTCLQ). 3 N-linked (GlcNAc...) asparagine glycosylation sites follow: Asn-74, Asn-175, and Asn-179. Cystine bridges form between Cys-108–Cys-269 and Cys-341–Cys-385. Residue Ser-190 is the Charge relay system of the active site. Asn-223 carries N-linked (GlcNAc...) asparagine glycosylation. Catalysis depends on His-358, which acts as the Charge relay system. N-linked (GlcNAc...) asparagine glycans are attached at residues Asn-378, Asn-379, Asn-422, and Asn-423.

Belongs to the AB hydrolase superfamily. Lipase family. Class Lip subfamily.

The catalysed reaction is a triacylglycerol + H2O = a diacylglycerol + a fatty acid + H(+). Functionally, secreted lipase that is able to hydrolze both the neutral triacylglycerols and the monopalmitate ester Tween 40, allowing the use of hydrolyzed products as carbon sources. Has broad lipolytic activity, which may be important for colonization and subsequent infection, therefore contributing to the persistence and virulence in human tissue. The polypeptide is Lipase 7 (Candida albicans (strain SC5314 / ATCC MYA-2876) (Yeast)).